Reading from the N-terminus, the 355-residue chain is 3-isopropylmalate dehydrogenase (355 aa).

Positions 98, 108, 132, and 223 each coordinate substrate. Residues aspartate 223, aspartate 247, and aspartate 251 each coordinate Mg(2+). Residue 283–295 (GSAPDIAGQQKAD) coordinates NAD(+).

It belongs to the isocitrate and isopropylmalate dehydrogenases family. LeuB type 2 subfamily. As to quaternary structure, homodimer. Requires Mg(2+) as cofactor. The cofactor is Mn(2+).

It is found in the cytoplasm. It catalyses the reaction (2R,3S)-3-isopropylmalate + NAD(+) = 4-methyl-2-oxopentanoate + CO2 + NADH. The protein operates within amino-acid biosynthesis; L-leucine biosynthesis; L-leucine from 3-methyl-2-oxobutanoate: step 3/4. Catalyzes the oxidation of 3-carboxy-2-hydroxy-4-methylpentanoate (3-isopropylmalate) to 3-carboxy-4-methyl-2-oxopentanoate. The product decarboxylates to 4-methyl-2 oxopentanoate. In Clavibacter sepedonicus (Clavibacter michiganensis subsp. sepedonicus), this protein is 3-isopropylmalate dehydrogenase.